Reading from the N-terminus, the 303-residue chain is UDP-3-O-acyl-N-acetylglucosamine deacetylase (303 aa).

Residues histidine 78, histidine 237, and aspartate 241 each contribute to the Zn(2+) site. Histidine 264 serves as the catalytic Proton donor.

Belongs to the LpxC family. Requires Zn(2+) as cofactor.

It carries out the reaction a UDP-3-O-[(3R)-3-hydroxyacyl]-N-acetyl-alpha-D-glucosamine + H2O = a UDP-3-O-[(3R)-3-hydroxyacyl]-alpha-D-glucosamine + acetate. It functions in the pathway glycolipid biosynthesis; lipid IV(A) biosynthesis; lipid IV(A) from (3R)-3-hydroxytetradecanoyl-[acyl-carrier-protein] and UDP-N-acetyl-alpha-D-glucosamine: step 2/6. Functionally, catalyzes the hydrolysis of UDP-3-O-myristoyl-N-acetylglucosamine to form UDP-3-O-myristoylglucosamine and acetate, the committed step in lipid A biosynthesis. The polypeptide is UDP-3-O-acyl-N-acetylglucosamine deacetylase (Xanthomonas campestris pv. campestris (strain 8004)).